Here is a 276-residue protein sequence, read N- to C-terminus: NH(3)-dependent NAD(+) synthetase (276 aa).

An ATP-binding site is contributed by 43–50 (GISGGVDS). Asp49 provides a ligand contact to Mg(2+). Residue Arg146 participates in deamido-NAD(+) binding. Thr166 contacts ATP. Glu171 serves as a coordination point for Mg(2+). Deamido-NAD(+) contacts are provided by Lys179 and Asp186. The ATP site is built by Lys195 and Thr217. 266-267 (HK) is a binding site for deamido-NAD(+).

The protein belongs to the NAD synthetase family. Homodimer.

The catalysed reaction is deamido-NAD(+) + NH4(+) + ATP = AMP + diphosphate + NAD(+) + H(+). Its pathway is cofactor biosynthesis; NAD(+) biosynthesis; NAD(+) from deamido-NAD(+) (ammonia route): step 1/1. Functionally, catalyzes the ATP-dependent amidation of deamido-NAD to form NAD. Uses ammonia as a nitrogen source. The chain is NH(3)-dependent NAD(+) synthetase from Vibrio vulnificus (strain CMCP6).